The chain runs to 691 residues: Probable E3 ubiquitin-protein ligase RHG1A (691 aa).

Disordered regions lie at residues 71-91 (SLGE…NEQR), 151-235 (GPGT…PRGM), 316-336 (SFVV…GSRT), 349-373 (VGGT…SRSI), and 395-501 (QSSR…MHNR). Over residues 80-91 (TKDEASSHNEQR) the composition is skewed to basic and acidic residues. 2 stretches are compositionally biased toward polar residues: residues 204-213 (GESSSWTPGS) and 317-328 (FVVSRNPNSTPV). The segment covering 361–370 (RNLHLDETRS) has biased composition (basic and acidic residues). A compositionally biased stretch (polar residues) spans 395 to 406 (QSSRNVTNGNLN). Low complexity predominate over residues 407–419 (SASSVSRTGSTTS). A compositionally biased stretch (polar residues) spans 429–440 (NLAWTSYQNSPH). The span at 454-465 (RSLLSSLAADAT) shows a compositional bias: low complexity. Residues 637-678 (CCVCQEEYTEGEDMGTLECGHEFHSQCIKEWLKQKNLCPICK) form an RING-type; atypical zinc finger.

In terms of tissue distribution, expressed in stems, flowers, green siliques, cauline leaves, seeds and roots.

It catalyses the reaction S-ubiquitinyl-[E2 ubiquitin-conjugating enzyme]-L-cysteine + [acceptor protein]-L-lysine = [E2 ubiquitin-conjugating enzyme]-L-cysteine + N(6)-ubiquitinyl-[acceptor protein]-L-lysine.. The protein operates within protein modification; protein ubiquitination. Functionally, probable E3 ubiquitin-protein ligase that may possess E3 ubiquitin ligase activity in vitro. This is Probable E3 ubiquitin-protein ligase RHG1A from Arabidopsis thaliana (Mouse-ear cress).